Reading from the N-terminus, the 711-residue chain is Polyribonucleotide nucleotidyltransferase (711 aa).

Mg(2+) contacts are provided by Asp486 and Asp492. In terms of domain architecture, KH spans 553–612 (PRIHTIKINPDKIKDVIGKGGSVIRALTEETGTTIEIEDDGTVKIAATDGEKAKHAIRRI). Residues 622 to 690 (GRVYTGKVTR…RQGRIRLSIK (69 aa)) enclose the S1 motif domain. The segment at 690-711 (KEATEQSQPAAAPEAPAAEQGE) is disordered. A compositionally biased stretch (low complexity) spans 694–711 (EQSQPAAAPEAPAAEQGE).

Belongs to the polyribonucleotide nucleotidyltransferase family. In terms of assembly, component of the RNA degradosome, which is a multiprotein complex involved in RNA processing and mRNA degradation. Requires Mg(2+) as cofactor.

The protein resides in the cytoplasm. It carries out the reaction RNA(n+1) + phosphate = RNA(n) + a ribonucleoside 5'-diphosphate. Involved in mRNA degradation. Catalyzes the phosphorolysis of single-stranded polyribonucleotides processively in the 3'- to 5'-direction. This is Polyribonucleotide nucleotidyltransferase from Shigella dysenteriae serotype 1 (strain Sd197).